We begin with the raw amino-acid sequence, 211 residues long: Uracil phosphoribosyltransferase (211 aa).

Residues R78, R103, and 130 to 138 each bind 5-phospho-alpha-D-ribose 1-diphosphate; that span reads DPMLATGNS. Uracil-binding positions include I193 and 198-200; that span reads GDA. Residue D199 coordinates 5-phospho-alpha-D-ribose 1-diphosphate.

It belongs to the UPRTase family. It depends on Mg(2+) as a cofactor.

It carries out the reaction UMP + diphosphate = 5-phospho-alpha-D-ribose 1-diphosphate + uracil. The protein operates within pyrimidine metabolism; UMP biosynthesis via salvage pathway; UMP from uracil: step 1/1. With respect to regulation, allosterically activated by GTP. Its function is as follows. Catalyzes the conversion of uracil and 5-phospho-alpha-D-ribose 1-diphosphate (PRPP) to UMP and diphosphate. The sequence is that of Uracil phosphoribosyltransferase from Acinetobacter baumannii (strain AB307-0294).